The following is a 101-amino-acid chain: Integration host factor subunit alpha (101 aa).

The disordered stretch occupies residues phenylalanine 49–glutamate 70.

This sequence belongs to the bacterial histone-like protein family. In terms of assembly, heterodimer of an alpha and a beta chain.

Its function is as follows. This protein is one of the two subunits of integration host factor, a specific DNA-binding protein that functions in genetic recombination as well as in transcriptional and translational control. The polypeptide is Integration host factor subunit alpha (Nitrosospira multiformis (strain ATCC 25196 / NCIMB 11849 / C 71)).